The primary structure comprises 555 residues: Benzoyl-CoA-dihydrodiol lyase (555 aa).

Belongs to the benzoyl-CoA oxygenase component C family. Homodimer.

It catalyses the reaction 2,3-epoxy-2,3-dihydrobenzoyl-CoA + 2 H2O = (3Z)-6-oxohex-3-enoyl-CoA + formate + H(+). Catalyzes the ring opening of 2,3-epoxy-2,3-dihydroxybenzoyl-CoA to form 3,4-didehydroadipyl-CoA semialdehyde. In Aromatoleum evansii (Azoarcus evansii), this protein is Benzoyl-CoA-dihydrodiol lyase (boxC).